Consider the following 654-residue polypeptide: MNQPQRMAPVGTDKELSDLLDFSMMFPLPVTNGKGRPASLAGAQFGGSGLEDRPSSGSWGSGDQSSSSFDPSRTFSEGTHFTESHSSLSSSTFLGPGLGGKSGERGAYASFGRDAGVGGLTQAGFLSGELALNSPGPLSPSGMKGTSQYYPSYSGSSRRRAADGSLDTQPKKVRKVPPGLPSSVYPPSSGEDYGRDATAYPSAKTPSSTYPAPFYVADGSLHPSAELWSPPGQAGFGPMLGGGSSPLPLPPGSGPVGSSGSSSTFGGLHQHERMGYQLHGAEVNGGLPSASSFSSAPGATYGGVSSHTPPVSGADSLLGSRGTTAGSSGDALGKALASIYSPDHSSNNFSSSPSTPVGSPQGLAGTSQWPRAGAPGALSPSYDGGLHGLQSKIEDHLDEAIHVLRSHAVGTAGDMHTLLPGHGALASGFTGPMSLGGRHAGLVGGSHPEDGLAGSTSLMHNHAALPSQPGTLPDLSRPPDSYSGLGRAGATAAASEIKREEKEDEENTSAADHSEEEKKELKAPRARTSPDEDEDDLLPPEQKAEREKERRVANNARERLRVRDINEAFKELGRMCQLHLNSEKPQTKLLILHQAVSVILNLEQQVRERNLNPKAACLKRREEEKVSGVVGDPQMVLSAPHPGLSEAHNPAGHM.

Positions 19–27 (LLDFSMMFP) match the 9aaTAD motif. The disordered stretch occupies residues 31–103 (TNGKGRPASL…LGPGLGGKSG (73 aa)). Over residues 55-68 (SSGSWGSGDQSSSS) the composition is skewed to low complexity. Over residues 69–79 (FDPSRTFSEGT) the composition is skewed to polar residues. Low complexity predominate over residues 84 to 94 (SHSSLSSSTFL). 2 positions are modified to phosphoserine: S134 and S139. 4 disordered regions span residues 135–205 (PGPL…SAKT), 239–268 (MLGG…FGGL), 292–329 (SFSS…GSSG), and 343–385 (DHSS…YDGG). The span at 147 to 156 (SQYYPSYSGS) shows a compositional bias: low complexity. A Nuclear localization signal motif is present at residues 170-176 (PKKVRKV). Positions 256–268 (VGSSGSSSTFGGL) are enriched in low complexity. Residues 343-354 (DHSSNNFSSSPS) are compositionally biased toward low complexity. T355 carries the phosphothreonine modification. S359 bears the Phosphoserine mark. An Omega-N-methylarginine modification is found at R371. The residue at position 379 (S379) is a Phosphoserine. Positions 389–425 (LQSKIEDHLDEAIHVLRSHAVGTAGDMHTLLPGHGAL) are leucine-zipper. The disordered stretch occupies residues 461–552 (NHAALPSQPG…KAEREKERRV (92 aa)). K498 is covalently cross-linked (Glycyl lysine isopeptide (Lys-Gly) (interchain with G-Cter in SUMO2)). The span at 512 to 523 (DHSEEEKKELKA) shows a compositional bias: basic and acidic residues. S529 is subject to Phosphoserine. The residue at position 531 (D531) is a Phosphothreonine. The span at 542–552 (QKAEREKERRV) shows a compositional bias: basic and acidic residues. The bHLH domain maps to 549–602 (ERRVANNARERLRVRDINEAFKELGRMCQLHLNSEKPQTKLLILHQAVSVILNL). A Glycyl lysine isopeptide (Lys-Gly) (interchain with G-Cter in SUMO2) cross-link involves residue K625. The interval 633–654 (PQMVLSAPHPGLSEAHNPAGHM) is disordered.

Homodimer. Heterodimer; efficient DNA binding requires dimerization with another bHLH protein. Forms a heterodimer with ASH1, TWIST1 and TWIST2. Forms a heterodimer with MYOG; heterodimerization enhances MYOG DNA-binding and transcriptional activities. Forms a heterodimer with NEUROD1; the heterodimer is inhibited in presence of ID2, but not NR0B2, to E-box element. Forms a heterodimer with TCF15; the heterodimer binds E-box element. Forms a heterodimer with ATOH8; repress transcription of TCF3 and TCF3/NEUROG3 dimer-induced transactivation of E box-dependent promoters. Component of a nuclear TAL-1 complex composed at least of CBFA2T3, LDB1, TAL1 and TCF3. Interacts with NEUROD2, PTF1A and TGFB1I1. Interacts with EP300 and UBE2I. Interacts with BHLHA9. Interacts with ASB2; the interaction is mediated by SKP2 and targets TCF3 for Notch-induced proteasomal degradation. As to quaternary structure, forms a heterodimer with ATOH7; required for ATOH7 DNA-binding. In terms of assembly, interacts with RALGAPA1 and FIGLA. In terms of processing, phosphorylated following NGF stimulation. Undergoes Notch-induced ubiquitination and subsequent proteasomal degradation which is mediated by ASB1 or ASB2, the substrate-recognition components of probable ECS E3 ubiquitin-protein ligase complexes.

It is found in the nucleus. Its function is as follows. Transcriptional regulator involved in the initiation of neuronal differentiation and mesenchymal to epithelial transition. Heterodimers between TCF3 and tissue-specific basic helix-loop-helix (bHLH) proteins play major roles in determining tissue-specific cell fate during embryogenesis, like muscle or early B-cell differentiation. Together with TCF15, required for the mesenchymal to epithelial transition. Dimers bind DNA on E-box motifs: 5'-CANNTG-3'. Binds to the kappa-E2 site in the kappa immunoglobulin gene enhancer. Binds to IEB1 and IEB2, which are short DNA sequences in the insulin gene transcription control region. Facilitates ATOH7 binding to DNA at the consensus sequence 5'-CAGGTG-3', and positively regulates transcriptional activity. This is Transcription factor E2-alpha (TCF3) from Homo sapiens (Human).